Here is a 536-residue protein sequence, read N- to C-terminus: 2-isopropylmalate synthase (536 aa).

Positions 8–269 constitute a Pyruvate carboxyltransferase domain; that stretch reads IIIFDTTLRD…YYNPFLGRPV (262 aa). Residues aspartate 17, histidine 208, histidine 210, and asparagine 244 each contribute to the Mn(2+) site. The regulatory domain stretch occupies residues 408–536; sequence RLELVQVSCG…KEKAAVTSAS (129 aa).

The protein belongs to the alpha-IPM synthase/homocitrate synthase family. LeuA type 1 subfamily. Homodimer. Requires Mn(2+) as cofactor.

It is found in the cytoplasm. It catalyses the reaction 3-methyl-2-oxobutanoate + acetyl-CoA + H2O = (2S)-2-isopropylmalate + CoA + H(+). Its pathway is amino-acid biosynthesis; L-leucine biosynthesis; L-leucine from 3-methyl-2-oxobutanoate: step 1/4. In terms of biological role, catalyzes the condensation of the acetyl group of acetyl-CoA with 3-methyl-2-oxobutanoate (2-ketoisovalerate) to form 3-carboxy-3-hydroxy-4-methylpentanoate (2-isopropylmalate). This Gloeothece citriformis (strain PCC 7424) (Cyanothece sp. (strain PCC 7424)) protein is 2-isopropylmalate synthase.